The sequence spans 241 residues: Geranylgeranylglyceryl phosphate synthase (241 aa).

Mg(2+) is bound by residues Asp-19 and Ser-46. Sn-glycerol 1-phosphate-binding positions include 167–173, 198–199, and 220–221; these read YLEAGSG, GG, and GT.

It belongs to the GGGP/HepGP synthase family. Group II subfamily. Mg(2+) serves as cofactor.

It is found in the cytoplasm. It catalyses the reaction sn-glycerol 1-phosphate + (2E,6E,10E)-geranylgeranyl diphosphate = sn-3-O-(geranylgeranyl)glycerol 1-phosphate + diphosphate. The protein operates within membrane lipid metabolism; glycerophospholipid metabolism. In terms of biological role, prenyltransferase that catalyzes the transfer of the geranylgeranyl moiety of geranylgeranyl diphosphate (GGPP) to the C3 hydroxyl of sn-glycerol-1-phosphate (G1P). This reaction is the first ether-bond-formation step in the biosynthesis of archaeal membrane lipids. In Pyrobaculum calidifontis (strain DSM 21063 / JCM 11548 / VA1), this protein is Geranylgeranylglyceryl phosphate synthase.